A 333-amino-acid polypeptide reads, in one-letter code: MKPFATHPDAIPADLQDVMDRLGSVAIEVATRIARGGIDEDLAGLCGTNTDGDGQKALDVIADDAFRAALEGSAVRFYASEEQEEAVTLNEAGTLALAIDPLDGSSNIDTNLSVGTIFAIWPAAATAETSFLRPGSDLIAGGYIIYGPQVCLMVSFGQGTQKYVLDPGSRSFVLVDRAVKVPPASTEFAINASNYRHWSKPIRAYIDDCVAGTEGPRGRNFNMRWLASLVAETHRILARGGVFLYPRDGRKGYEQGRLRYLYECAPIAFVITQAGGGATDGENPILGQTPARLHARTPFIFGSAEKVARITAYHDLPEQETSALFGNRGLFRS.

4 residues coordinate Mg(2+): Glu81, Asp100, Leu102, and Asp103. Substrate is bound by residues 103 to 106 (DGSS) and Asn191. Glu263 contacts Mg(2+).

Belongs to the FBPase class 1 family. In terms of assembly, homotetramer. The cofactor is Mg(2+).

It localises to the cytoplasm. It catalyses the reaction beta-D-fructose 1,6-bisphosphate + H2O = beta-D-fructose 6-phosphate + phosphate. The protein operates within carbohydrate biosynthesis; Calvin cycle. The sequence is that of Fructose-1,6-bisphosphatase class 1 1 from Cereibacter sphaeroides (strain ATCC 17025 / ATH 2.4.3) (Rhodobacter sphaeroides).